A 437-amino-acid chain; its full sequence is Triacylglycerol lipase (437 aa).

The region spanning 1-100 (MVSYVVALPE…AELANASLLQ (100 aa)) is the PE domain. The tract at residues 101-206 (SEFASGIGNG…GNSPPPLLNS (106 aa)) is linker. Residues 207–437 (LLGQTVQYTT…QINQQLGIAA (231 aa)) form a lipase region. Positions 239 to 241 (HGG) match the Involved in the stabilization of the negatively charged intermediate by the formation of the oxyanion hole motif. Catalysis depends on residues Ser-309, Asp-383, and His-413.

The protein in the N-terminal section; belongs to the mycobacterial PE family. PGRS subfamily. This sequence in the C-terminal section; belongs to the 'GDXG' lipolytic enzyme family. In terms of assembly, forms aggregates via its PE domain. Upon export, the PE domain is removed by proteolytic cleavage. Cleavage occurs at the cell surface and is not required for secretion. Cleaved after Gly-149 by the aspartic protease PecA. May also be cleaved before Leu-98 and after Ala-136.

It localises to the cytoplasm. The protein resides in the secreted. It is found in the cell wall. Its subcellular location is the cell surface. It carries out the reaction a triacylglycerol + H2O = a diacylglycerol + a fatty acid + H(+). The enzyme catalyses 1,2,3-tri-(9Z-octadecenoyl)-glycerol + H2O = di-(9Z)-octadecenoylglycerol + (9Z)-octadecenoate + H(+). It catalyses the reaction an acetyl ester + H2O = an aliphatic alcohol + acetate + H(+). The catalysed reaction is a butanoate ester + H2O = an aliphatic alcohol + butanoate + H(+). It carries out the reaction a hexanoate ester + H2O = an aliphatic alcohol + hexanoate + H(+). The enzyme catalyses an octanoate ester + H2O = an aliphatic alcohol + octanoate + H(+). It catalyses the reaction a dodecanoate ester + H2O = an aliphatic alcohol + dodecanoate + H(+). The catalysed reaction is a tetradecanoate ester + H2O = an aliphatic alcohol + tetradecanoate + H(+). It carries out the reaction hexadecanoate ester + H2O = an aliphatic alcohol + hexadecanoate + H(+). The enzyme catalyses octadecanoate ester + H2O = an aliphatic alcohol + octadecanoate + H(+). It catalyses the reaction 1-butyrylglycerol + H2O = butanoate + glycerol + H(+). The catalysed reaction is 1,2,3-tributanoylglycerol + H2O = dibutanoylglycerol + butanoate + H(+). PE domain down-regulates lipase activity. With respect to regulation, cleavage by PecA does not affect surface localization and lipase activity. Its activity is regulated as follows. Inhibited by diethyl-p-nitrophenyl phosphate (E-600) at 0.5 uM, by phenylmethanesulfonyl fluoride at 5 mM and by polyethylene glycol sorbitan monolaurate (Tween 20). Also inhibited by CaCl(2), CoCl(2), MnCl(2), ZnCl(2) and MgCl(2). Inhibited by several hydrazides compounds. Stimulated slightly by SDS at concentrations up to 2 mM, above which the activity is severely inhibited. Catalyzes the hydrolysis of both intracellular and extracellular triacylglycerol (TAG). In vitro, can also hydrolyze p-nitrophenyl (pNP) esters with various chain lengths, including pNP-acetate (C2), pNP-butyrate (C4), pNP-caproate (C6), pNP-caprylate (C8), pNP-laurate (C12), pNP-myristate (C14), pNP-palmitate (C16) and pNP-stearate (C18). Also hydrolyzes monobutyrin, tributyrin and trioctanoin. Overexpression results in increase of virulence characterized by reduced survival of infected mouse and increased burden of bacilli in the lungs. Hydrolyzes internal or host-derived TAG depending on its localization. Its function is as follows. Hydrolyzes TAG that accumulates within mycobacterial intracytosolic lipid inclusions (ILI). Probably responsible for the utilization of stored long-chain TAG during the dormancy and reactivation stages of the pathogen. In terms of biological role, hydrolyzes host-derived TAG. The polypeptide is Triacylglycerol lipase (Mycobacterium tuberculosis (strain ATCC 25618 / H37Rv)).